The primary structure comprises 662 residues: Protein Aster-C (662 aa).

The interval 1-34 is disordered; it reads MEGAPTVRQVMNEGDSSLATELQEDVEENPSPTV. The region spanning 69–136 is the GRAM domain; the sequence is EEYRRQFTHL…KNITFMTKEK (68 aa). Disordered regions lie at residues 212 to 237 and 250 to 284; these read SIED…EKLS and VSET…LPTL. Basic and acidic residues predominate over residues 265–276; that stretch reads LGKEESQNEKQT. Residues 326–497 enclose the VASt domain; it reads HGRLFINRIF…DLLIEESILN (172 aa). A helical transmembrane segment spans residues 557 to 577; sequence LIVVMSIFVLLLVLLNVTLFL.

It localises to the endoplasmic reticulum membrane. It is found in the cell membrane. Functionally, cholesterol transporter that mediates non-vesicular transport of cholesterol from the plasma membrane (PM) to the endoplasmic reticulum (ER). Contains unique domains for binding cholesterol and the PM, thereby serving as a molecular bridge for the transfer of cholesterol from the PM to the ER. Plays a crucial role in cholesterol homeostasis and has the unique ability to localize to the PM based on the level of membrane cholesterol. In lipid-poor conditions localizes to the ER membrane and in response to excess cholesterol in the PM is recruited to the endoplasmic reticulum-plasma membrane contact sites (EPCS) which is mediated by the GRAM domain. At the EPCS, the sterol-binding VASt/ASTER domain binds to the cholesterol in the PM and facilitates its transfer from the PM to ER. This chain is Protein Aster-C (GRAMD1C), found in Pongo abelii (Sumatran orangutan).